The sequence spans 926 residues: Translation initiation factor IF-2 (926 aa).

Disordered regions lie at residues 1–185 and 200–299; these read MTDS…EEVE and EDKA…RRRG. Composition is skewed to low complexity over residues 13–24 and 70–96; these read TGKKTLTLKPTG and APAT…AAPQ. Residues 110 to 133 are compositionally biased toward polar residues; that stretch reads TNQYSQQRHPGQQNRPQASSQPSR. The segment covering 151–185 has biased composition (basic and acidic residues); that stretch reads MDARRRALAEAQVREVEDAKRRAEEEVRRQAEEVE. Over residues 211–251 the composition is skewed to low complexity; that stretch reads APEPVAEPVAPVAETPRAADPAPRAPSPAGAKPAAGAPAPS. A tr-type G domain is found at 424-591; that stretch reads SRPPVVTIMG…AVLLQAEILD (168 aa). The tract at residues 433-440 is G1; it reads GHVDHGKT. GTP is bound at residue 433–440; sequence GHVDHGKT. The tract at residues 458–462 is G2; sequence GITQH. Positions 479-482 are G3; it reads DTPG. GTP is bound by residues 479-483 and 533-536; these read DTPGH and NKID. Positions 533-536 are G4; sequence NKID. A G5 region spans residues 569-571; that stretch reads SAK.

It belongs to the TRAFAC class translation factor GTPase superfamily. Classic translation factor GTPase family. IF-2 subfamily.

It localises to the cytoplasm. Functionally, one of the essential components for the initiation of protein synthesis. Protects formylmethionyl-tRNA from spontaneous hydrolysis and promotes its binding to the 30S ribosomal subunits. Also involved in the hydrolysis of GTP during the formation of the 70S ribosomal complex. In Allorhizobium ampelinum (strain ATCC BAA-846 / DSM 112012 / S4) (Agrobacterium vitis (strain S4)), this protein is Translation initiation factor IF-2.